Reading from the N-terminus, the 374-residue chain is MEESDSEKKTEKENVGPKVEPPLGEPEGSLGWAMPNAAMKKKVLLMGKSGSGKTSMRSIIFANYIARDTRRLGATILDRIHSLQINSSLSTYSLVDSVGNTKTFDVEHSHVRFLGNLVLNLWDCGGQDTFMENYFTSQRDNIFRNVEVLIYVFDVESRELEKDMHYYQSCLEAILQNSPEAKIFCLVHKMDLVQEDQRDLIFKEREEDLRRLSRPLECSCFRTSIWDETLYKAWSSIVYQLIPNVQQLEMNLRNFAEIIEADEVLLFERATFLVISHYQCKEQRDAHRFEKISNIIKQFKLSCSKLAASFQSMEVRNSNFAAFIDIFTSNTYVMVVMSDPSIPSAATLINIRNARKHFEKLERVDGPKQCLLMR.

At Met1 the chain carries N-acetylmethionine. Residues 1–15 (MEESDSEKKTEKENV) are compositionally biased toward basic and acidic residues. Residues 1 to 30 (MEESDSEKKTEKENVGPKVEPPLGEPEGSL) are disordered. Residues Ser49 and Gly50 each coordinate GTP. Residues Gly50, Ser51, Gly52, Lys53, Thr54, Ser55, Thr69, and Thr75 each contribute to the GDP site. Gly52, Lys53, Thr54, Ser55, Thr69, Thr75, Gly126, and His188 together coordinate GTP. Residues His188 and Asp191 each contribute to the GDP site. Residue Lys203 forms a Glycyl lysine isopeptide (Lys-Gly) (interchain with G-Cter in ubiquitin) linkage. Leu209 and Ile225 together coordinate GDP. GTP is bound at residue Ile225. Glycyl lysine isopeptide (Lys-Gly) (interchain with G-Cter in ubiquitin) cross-links involve residues Lys281, Lys291, and Lys305.

This sequence belongs to the GTR/RAG GTP-binding protein family. Interacts with RRAGC and RRAGD; heterodimerization stabilizes RRAG proteins. The GTP-bound form of RRAGB (in complex with the GDP-bound form of RRAGC or RRAGD) interacts with RPTOR, thereby promoting recruitment of mTORC1 to the lysosomes. Component of the lysosomal folliculin complex (LFC), composed of FLCN, FNIP1 (or FNIP2), RagA/RRAGA or RagB/RRAGB GDP-bound, RagC/RRAGC or RagD/RRAGD GTP-bound, and Ragulator. Interacts with SH3BP4; the interaction with this negative regulator is most probably direct, preferentially occurs with the inactive GDP-bound form of RRAGB, is negatively regulated by amino acids and prevents interaction with RPTOR. Interacts with the GATOR1 complex; inactivates RRAGB. The Rag heterodimer interacts with SLC38A9; the probable amino acid sensor. Interacts with SESN1, SESN2 and SESN3.

The protein localises to the cytoplasm. The protein resides in the lysosome membrane. The catalysed reaction is GTP + H2O = GDP + phosphate + H(+). Its activity is regulated as follows. The activation of GTP-binding proteins is generally mediated by a guanine exchange factor (GEF), while inactivation through hydrolysis of bound GTP is catalyzed by a GTPase activating protein (GAP). The Ragulator complex functions as a GEF and promotes the active GTP-bound form. The GATOR1 complex functions as a GAP and stimulates RRAGB GTPase activity to turn it into its inactive GDP-bound form, preventing mTORC1 recruitment and activation. Functionally, guanine nucleotide-binding protein that plays a crucial role in the cellular response to amino acid availability through regulation of the mTORC1 signaling cascade. Forms heterodimeric Rag complexes with RagC/RRAGC or RagD/RRAGD and cycles between an inactive GDP-bound and an active GTP-bound form: RagB/RRAGB is in its active form when GTP-bound RagB/RRAGB forms a complex with GDP-bound RagC/RRAGC (or RagD/RRAGD) and in an inactive form when GDP-bound RagB/RRAGB heterodimerizes with GTP-bound RagC/RRAGC (or RagD/RRAGD). In its GTP-bound active form, promotes the recruitment of mTORC1 to the lysosomes and its subsequent activation by the GTPase RHEB. Involved in the RCC1/Ran-GTPase pathway. This Mus musculus (Mouse) protein is Ras-related GTP-binding protein B.